We begin with the raw amino-acid sequence, 1169 residues long: Zinc finger protein 862 (1169 aa).

Positions 11–77 (VTFDDITVYL…SVQGQRSLLE (67 aa)) constitute a KRAB 1 domain. The TTF-type 1 zinc-finger motif lies at 135 to 218 (KPRSIQKSWF…RDPIWAARFR (84 aa)). The region spanning 333-404 (VVFEDVAVYF…DPNGPKWGKG (72 aa)) is the KRAB 2 domain. The TTF-type 2 zinc finger occupies 461–544 (RPRSIQRSWF…KEDTPHTALV (84 aa)).

The protein resides in the nucleus. May be involved in transcriptional regulation. In Homo sapiens (Human), this protein is Zinc finger protein 862 (ZNF862).